A 111-amino-acid chain; its full sequence is uncharacterized protein (111 aa).

The next 4 membrane-spanning stretches (helical) occupy residues 3–23 (WVLV…LKHA), 24–44 (DSLL…ILLI), 54–74 (AAYT…GIVL), and 80–100 (AAQM…KLFT).

This sequence belongs to the drug/metabolite transporter (DMT) superfamily. Small multidrug resistance (SMR) (TC 2.A.7.1) family.

It localises to the cell membrane. This is an uncharacterized protein from Bacillus subtilis (strain 168).